The sequence spans 312 residues: Pyridoxal kinase (312 aa).

Methionine 1 is modified (N-acetylmethionine). The pyridoxal 5'-phosphate site is built by serine 12 and threonine 47. Serine 12 and threonine 47 together coordinate pyridoxamine. Position 59 is a phosphoserine (serine 59). Position 113 (aspartate 113) interacts with K(+). Tyrosine 127 provides a ligand contact to pyridoxal 5'-phosphate. Residue threonine 148 participates in K(+) binding. Position 150 (asparagine 150) interacts with ADP. Asparagine 150 provides a ligand contact to ATP. Residue serine 164 is modified to Phosphoserine. Threonine 186 contributes to the K(+) binding site. 186-187 contributes to the ADP binding site; the sequence is TS. 186–187 contacts ATP; it reads TS. Phosphoserine is present on serine 213. ADP contacts are provided by residues 223-226 and 233-234; these read MHKV and TG. Residues 223 to 226 and 233 to 234 contribute to the ATP site; these read MHKV and TG. A pyridoxal 5'-phosphate-binding site is contributed by 232–235; it reads GTGD. Aspartate 235 provides a ligand contact to pyridoxamine. Catalysis depends on aspartate 235, which acts as the Proton acceptor. Position 285 is a phosphoserine (serine 285).

Belongs to the pyridoxine kinase family. Homodimer. Requires Zn(2+) as cofactor. Mg(2+) is required as a cofactor. As to expression, ubiquitous.

The protein resides in the cytoplasm. It localises to the cytosol. It carries out the reaction pyridoxal + ATP = pyridoxal 5'-phosphate + ADP + H(+). It catalyses the reaction pyridoxamine + ATP = pyridoxamine 5'-phosphate + ADP + H(+). The enzyme catalyses pyridoxine + ATP = pyridoxine 5'-phosphate + ADP + H(+). The protein operates within cofactor metabolism; pyridoxal 5'-phosphate salvage; pyridoxal 5'-phosphate from pyridoxal: step 1/1. Its pathway is cofactor metabolism; pyridoxal 5'-phosphate salvage; pyridoxine 5'-phosphate from pyridoxine: step 1/1. It functions in the pathway cofactor metabolism; pyridoxal 5'-phosphate salvage; pyridoxamine 5'-phosphate from pyridoxamine: step 1/1. With respect to regulation, activated by K(+). Activity is increased in the presence of Na(+). Catalyzes the phosphorylation of the dietary vitamin B6 vitamers pyridoxal (PL), pyridoxine (PN) and pyridoxamine (PM) to form pyridoxal 5'-phosphate (PLP), pyridoxine 5'-phosphate (PNP) and pyridoxamine 5'-phosphate (PMP), respectively. PLP is the active form of vitamin B6, and acts as a cofactor for over 140 different enzymatic reactions. In Ovis aries (Sheep), this protein is Pyridoxal kinase (PDXK).